The chain runs to 262 residues: Tetratricopeptide repeat protein 33 (262 aa).

3 TPR repeats span residues 59 to 92, 93 to 126, and 127 to 160; these read SKQL…TPND, ATLY…NPHS, and WESW…YPMN. Ser197 carries the post-translational modification Phosphoserine. At Thr251 the chain carries Phosphothreonine.

This is Tetratricopeptide repeat protein 33 (TTC33) from Homo sapiens (Human).